The following is a 210-amino-acid chain: Pyridoxine/pyridoxamine 5'-phosphate oxidase (210 aa).

Substrate-binding positions include 7–10 (REDY) and Lys-65. Residues 60-65 (RMVLLK), 75-76 (FT), Arg-81, Lys-82, and Gln-104 contribute to the FMN site. Substrate-binding residues include Tyr-122, Arg-126, and Ser-130. Residues 139-140 (QS) and Trp-183 each bind FMN. Residue 189–191 (RLH) participates in substrate binding. Arg-193 contributes to the FMN binding site.

Belongs to the pyridoxamine 5'-phosphate oxidase family. Homodimer. It depends on FMN as a cofactor.

The enzyme catalyses pyridoxamine 5'-phosphate + O2 + H2O = pyridoxal 5'-phosphate + H2O2 + NH4(+). The catalysed reaction is pyridoxine 5'-phosphate + O2 = pyridoxal 5'-phosphate + H2O2. It functions in the pathway cofactor metabolism; pyridoxal 5'-phosphate salvage; pyridoxal 5'-phosphate from pyridoxamine 5'-phosphate: step 1/1. It participates in cofactor metabolism; pyridoxal 5'-phosphate salvage; pyridoxal 5'-phosphate from pyridoxine 5'-phosphate: step 1/1. In terms of biological role, catalyzes the oxidation of either pyridoxine 5'-phosphate (PNP) or pyridoxamine 5'-phosphate (PMP) into pyridoxal 5'-phosphate (PLP). In Neisseria meningitidis serogroup C (strain 053442), this protein is Pyridoxine/pyridoxamine 5'-phosphate oxidase.